The sequence spans 352 residues: Biotin synthase (352 aa).

Positions 44 to 262 (NRVQVSTLLS…LAVARILMPQ (219 aa)) constitute a Radical SAM core domain. 3 residues coordinate [4Fe-4S] cluster: Cys-59, Cys-63, and Cys-66. [2Fe-2S] cluster is bound by residues Cys-103, Cys-134, Cys-194, and Arg-266.

The protein belongs to the radical SAM superfamily. Biotin synthase family. In terms of assembly, homodimer. The cofactor is [4Fe-4S] cluster. [2Fe-2S] cluster serves as cofactor.

It carries out the reaction (4R,5S)-dethiobiotin + (sulfur carrier)-SH + 2 reduced [2Fe-2S]-[ferredoxin] + 2 S-adenosyl-L-methionine = (sulfur carrier)-H + biotin + 2 5'-deoxyadenosine + 2 L-methionine + 2 oxidized [2Fe-2S]-[ferredoxin]. Its pathway is cofactor biosynthesis; biotin biosynthesis; biotin from 7,8-diaminononanoate: step 2/2. In terms of biological role, catalyzes the conversion of dethiobiotin (DTB) to biotin by the insertion of a sulfur atom into dethiobiotin via a radical-based mechanism. This Pseudomonas savastanoi pv. phaseolicola (strain 1448A / Race 6) (Pseudomonas syringae pv. phaseolicola (strain 1448A / Race 6)) protein is Biotin synthase.